The following is a 577-amino-acid chain: Type I restriction enzyme MjaVII methylase subunit (577 aa).

Residues 251–256, 281–283, E306, and 335–336 contribute to the S-adenosyl-L-methionine site; these read EVYTPV, SGT, and DS.

This sequence belongs to the N4/N6-methyltransferase family. As to quaternary structure, the type I restriction/modification system is composed of three polypeptides R, M and S.

It carries out the reaction a 2'-deoxyadenosine in DNA + S-adenosyl-L-methionine = an N(6)-methyl-2'-deoxyadenosine in DNA + S-adenosyl-L-homocysteine + H(+). Its function is as follows. The subtype gamma methyltransferase (M) subunit of a type I restriction enzyme. The M and S subunits together form a methyltransferase (MTase) that methylates A-3 on the top and bottom strands of the sequence 5'-CAAN(7)TGG-3'. In the presence of the R subunit the complex can also act as an endonuclease, binding to the same target sequence but cutting the DNA some distance from this site. Whether the DNA is cut or modified depends on the methylation state of the target sequence. When the target site is unmodified, the DNA is cut. When the target site is hemimethylated, the complex acts as a maintenance MTase modifying the DNA so that both strands become methylated. After locating a non-methylated recognition site, the enzyme complex serves as a molecular motor that translocates DNA in an ATP-dependent manner until a collision occurs that triggers cleavage. The polypeptide is Type I restriction enzyme MjaVII methylase subunit (Methanocaldococcus jannaschii (strain ATCC 43067 / DSM 2661 / JAL-1 / JCM 10045 / NBRC 100440) (Methanococcus jannaschii)).